Reading from the N-terminus, the 610-residue chain is Zinc metalloproteinase-disintegrin-like bothropasin (610 aa).

An N-terminal signal peptide occupies residues 1-20 (MIEVLLVTICLAAFPYQGSS). Positions 21–191 (IILESGNVND…ASQLVVTAEQ (171 aa)) are excised as a propeptide. Residue glutamine 192 is modified to Pyrrolidone carboxylic acid. The Peptidase M12B domain occupies 198 to 394 (RYVELFIVVD…ENPQCILNEP (197 aa)). 2 residues coordinate Ca(2+): glutamate 201 and aspartate 285. 3 disulfide bridges follow: cysteine 309/cysteine 389, cysteine 349/cysteine 373, and cysteine 351/cysteine 356. Histidine 334 lines the Zn(2+) pocket. Glutamate 335 is a catalytic residue. Positions 338 and 344 each coordinate Zn(2+). An N-linked (GlcNAc...) asparagine glycan is attached at asparagine 372. The Ca(2+) site is built by cysteine 389, asparagine 392, valine 404, asparagine 407, leucine 409, glutamate 411, glutamate 414, and aspartate 417. Residues 402 to 488 (PPVCGNELLE…ECPADVFHKN (87 aa)) enclose the Disintegrin domain. Intrachain disulfides connect cysteine 405–cysteine 424, cysteine 405–cysteine 434, cysteine 416–cysteine 429, cysteine 416–cysteine 434, cysteine 418–cysteine 424, cysteine 428–cysteine 451, cysteine 442–cysteine 448, cysteine 447–cysteine 473, cysteine 460–cysteine 480, cysteine 467–cysteine 492, cysteine 467–cysteine 499, cysteine 492–cysteine 504, cysteine 499–cysteine 504, cysteine 511–cysteine 526, cysteine 511–cysteine 561, cysteine 526–cysteine 572, cysteine 539–cysteine 549, cysteine 549–cysteine 556, cysteine 556–cysteine 598, cysteine 561–cysteine 572, cysteine 592–cysteine 603, and cysteine 598–cysteine 603. Residues 466-468 (ECD) carry the D/ECD-tripeptide motif. Ca(2+) is bound by residues aspartate 468, proline 469, glutamate 471, aspartate 483, and valine 484.

It belongs to the venom metalloproteinase (M12B) family. P-III subfamily. P-IIIb sub-subfamily. Monomer. Requires Zn(2+) as cofactor. As to expression, expressed by the venom gland.

It is found in the secreted. It carries out the reaction Cleavage of 5-His-|-Leu-6, 10-His-|-Leu-11, 14-Ala-|-Leu-15, 16-Tyr-|-Leu-17 and 24-Phe-|-Phe-25 in insulin B chain.. Inhibited by EDTA and EGTA. In terms of biological role, has caseinolytic activity. Causes hemorrhage on rabbit skin and causes myonecrosis in mouse tibialis anterior muscle. Its function is as follows. Inhibits platelet aggregation. This is Zinc metalloproteinase-disintegrin-like bothropasin from Bothrops jararaca (Jararaca).